A 318-amino-acid polypeptide reads, in one-letter code: NADH-ubiquinone oxidoreductase chain 1 (318 aa).

Transmembrane regions (helical) follow at residues Phe2–Leu22, Met70–Pro90, Leu100–Gly120, Val136–Met156, Leu172–Glu192, Leu222–Phe242, Glu253–Ile273, and Leu294–Ile314.

The protein belongs to the complex I subunit 1 family. As to quaternary structure, core subunit of respiratory chain NADH dehydrogenase (Complex I) which is composed of 45 different subunits.

It localises to the mitochondrion inner membrane. The enzyme catalyses a ubiquinone + NADH + 5 H(+)(in) = a ubiquinol + NAD(+) + 4 H(+)(out). Its function is as follows. Core subunit of the mitochondrial membrane respiratory chain NADH dehydrogenase (Complex I) which catalyzes electron transfer from NADH through the respiratory chain, using ubiquinone as an electron acceptor. Essential for the catalytic activity and assembly of complex I. The chain is NADH-ubiquinone oxidoreductase chain 1 (MT-ND1) from Balaenoptera musculus (Blue whale).